We begin with the raw amino-acid sequence, 92 residues long: Neurophysin 2 (92 aa).

Intrachain disulfides connect cysteine 7–cysteine 51, cysteine 10–cysteine 24, cysteine 18–cysteine 41, cysteine 25–cysteine 31, cysteine 58–cysteine 70, cysteine 64–cysteine 82, and cysteine 71–cysteine 76.

The protein belongs to the vasopressin/oxytocin family.

It is found in the secreted. Functionally, neurophysin 2 specifically binds the midbrain peptide hormone vasopressin. The protein is Neurophysin 2 (AVP) of Equus caballus (Horse).